The chain runs to 210 residues: UPF0173 protein PF0020 (210 aa).

Belongs to the UPF0173 family.

The protein is UPF0173 protein PF0020 of Pyrococcus furiosus (strain ATCC 43587 / DSM 3638 / JCM 8422 / Vc1).